A 79-amino-acid polypeptide reads, in one-letter code: uncharacterized protein (79 aa).

Residues Ser3–Ile54 enclose the TM2 domain. 2 helical membrane passes run Ile8–Gly28 and Ile37–Leu57.

The protein localises to the cell membrane. This is an uncharacterized protein from Bacillus subtilis (strain 168).